A 166-amino-acid polypeptide reads, in one-letter code: UPF0303 protein Avin_29320 (166 aa).

It belongs to the UPF0303 family.

This chain is UPF0303 protein Avin_29320, found in Azotobacter vinelandii (strain DJ / ATCC BAA-1303).